A 230-amino-acid polypeptide reads, in one-letter code: Sodium channel modifier 1 (230 aa).

S2 carries the post-translational modification Phosphoserine. Positions 4–20 (KREGDDWSQLNVLKKRR) match the Bipartite nuclear localization signal motif. A Matrin-type zinc finger spans residues 42 to 74 (FACAICPHRPVLDTLAMLTAHRAGKKHLSSLQL). K67 participates in a covalent cross-link: Glycyl lysine isopeptide (Lys-Gly) (interchain with G-Cter in SUMO2). Disordered regions lie at residues 76 to 106 (YGKKPPGKGTEQNPRQHNELRREETTAEAPL) and 129 to 191 (RRKY…RALD). The segment covering 89–100 (PRQHNELRREET) has biased composition (basic and acidic residues). A compositionally biased stretch (pro residues) spans 142-151 (SRPPLPPPEV). The segment covering 167 to 180 (GSQTKESATVSSPA) has biased composition (polar residues). Phosphoserine is present on residues S183 and S219. Positions 188–230 (RALDHYLTLRSSGWIPDGRGRWIKDENVEFDSDEEEPPDLPLD) are required for interaction with LUC7L2.

As to quaternary structure, component of the minor spliceosome. Within this complex, interacts with RNF113A, as well as with SF3B1/SF3b155, SF3B2/SF3b145, SF3B3/SF3b130 and CDC5L. May interact with LUC7L2 and SNRNP70.

The protein localises to the nucleus. The protein resides in the nucleoplasm. It is found in the nucleus speckle. Its function is as follows. As a component of the minor spliceosome, involved in the splicing of U12-type introns in pre-mRNAs. Plays a role in the regulation of primary cilia length and Hedgehog signaling. The chain is Sodium channel modifier 1 (SCNM1) from Bos taurus (Bovine).